A 523-amino-acid polypeptide reads, in one-letter code: Ribonuclease Y (523 aa).

Residues 28–48 (TYYIVATIIIAVIAVYVDYYI) form a helical membrane-spanning segment. One can recognise a KH domain in the interval 227–312 (TVYVVNLPND…EMVEKAKKEV (86 aa)). The HD domain maps to 353-446 (VLKHSIEVSY…VQAADAISAA (94 aa)).

This sequence belongs to the RNase Y family.

It is found in the cell membrane. Its function is as follows. Endoribonuclease that initiates mRNA decay. The chain is Ribonuclease Y from Clostridium tetani (strain Massachusetts / E88).